A 453-amino-acid polypeptide reads, in one-letter code: uncharacterized protein (453 aa).

A YrdC-like domain is found at 276–437 (IAQTKQIKAL…TKQIVRGSST (162 aa)).

This is an uncharacterized protein from Mycoplasma pneumoniae (strain ATCC 29342 / M129 / Subtype 1) (Mycoplasmoides pneumoniae).